The chain runs to 198 residues: Nucleoid occlusion factor SlmA (198 aa).

An HTH tetR-type domain is found at 11–71 (PNRKHQILES…GLIDFIEESI (61 aa)). The segment at residues 34-53 (TTAKLAAEVGFSEAALYRHF) is a DNA-binding region (H-T-H motif).

Belongs to the nucleoid occlusion factor SlmA family. As to quaternary structure, homodimer. Interacts with FtsZ.

The protein localises to the cytoplasm. Its subcellular location is the nucleoid. In terms of biological role, required for nucleoid occlusion (NO) phenomenon, which prevents Z-ring formation and cell division over the nucleoid. Acts as a DNA-associated cell division inhibitor that binds simultaneously chromosomal DNA and FtsZ, and disrupts the assembly of FtsZ polymers. SlmA-DNA-binding sequences (SBS) are dispersed on non-Ter regions of the chromosome, preventing FtsZ polymerization at these regions. In Colwellia psychrerythraea (strain 34H / ATCC BAA-681) (Vibrio psychroerythus), this protein is Nucleoid occlusion factor SlmA.